The chain runs to 239 residues: Zwei Ig domain protein zig-7 (239 aa).

An N-terminal signal peptide occupies residues 1–21 (MKLINCISIALLCTLVDFSSA). Asn43 carries N-linked (GlcNAc...) asparagine glycosylation. Positions 145–211 (PHVIGAERRG…TEDHIGKYRC (67 aa)) constitute an Ig-like C2-type domain. Cys164 and Cys211 are joined by a disulfide.

Expressed in body wall muscles.

The protein resides in the secreted. In terms of biological role, probably not involved in maintaining the position of ASI and ASH head neuron cell bodies and ventral nerve cord axons of PVQ, PVP, RMEV, AVK and HSN neurons. The protein is Zwei Ig domain protein zig-7 of Caenorhabditis elegans.